Reading from the N-terminus, the 384-residue chain is Glucans biosynthesis protein C (384 aa).

10 helical membrane-spanning segments follow: residues 17–37 (AWLM…THSW), 54–74 (FIHA…SYML), 91–111 (VGIP…ILLQ), 140–160 (LWFL…FTWF), 173–193 (AISL…YAAI), 212–232 (FIVM…LAFI), 240–260 (FTTP…AYLL), 274–294 (TESV…FSLG), 311–331 (ASLF…AYIT), and 338–358 (LIGF…LYEI).

The protein belongs to the acyltransferase 3 family. OpgC subfamily.

Its subcellular location is the cell membrane. It participates in glycan metabolism; osmoregulated periplasmic glucan (OPG) biosynthesis. Functionally, necessary for the succinyl substitution of periplasmic glucans. Could catalyze the transfer of succinyl residues from the cytoplasmic side of the membrane to the nascent glucan backbones on the periplasmic side of the membrane. The chain is Glucans biosynthesis protein C from Salmonella heidelberg (strain SL476).